A 247-amino-acid polypeptide reads, in one-letter code: Carboxy-S-adenosyl-L-methionine synthase (247 aa).

S-adenosyl-L-methionine-binding positions include tyrosine 39, 64 to 66, 89 to 90, 117 to 118, asparagine 132, and arginine 199; these read GCS, DN, and DI.

This sequence belongs to the class I-like SAM-binding methyltransferase superfamily. Cx-SAM synthase family. As to quaternary structure, homodimer.

The enzyme catalyses prephenate + S-adenosyl-L-methionine = carboxy-S-adenosyl-L-methionine + 3-phenylpyruvate + H2O. Catalyzes the conversion of S-adenosyl-L-methionine (SAM) to carboxy-S-adenosyl-L-methionine (Cx-SAM). The protein is Carboxy-S-adenosyl-L-methionine synthase of Pectobacterium atrosepticum (strain SCRI 1043 / ATCC BAA-672) (Erwinia carotovora subsp. atroseptica).